The following is a 478-amino-acid chain: Sialidase-4 (478 aa).

The FRIP motif motif lies at 22-25; that stretch reads YRVP. 2 residues coordinate substrate: Arg-23 and Arg-43. Catalysis depends on proton acceptor residues Asp-47 and Asp-48. Residues 127 to 138 form a BNR 1 repeat; that stretch reads VTSCDAGLTWGS. 2 residues coordinate substrate: Tyr-177 and Tyr-179. One copy of the BNR 2 repeat lies at 200–211; the sequence is FYSDDHGISWHC. Substrate-binding residues include Glu-222 and Arg-238. A BNR 3 repeat occupies 247 to 258; sequence ALSADEGTSFLP. Disordered regions lie at residues 285 to 307 and 335 to 359; these read IEPQDDRWTGSPRNTPHSPCFNL and SRSPENHGLEPGSDGDKTSWTPECP. Arg-383 serves as a coordination point for substrate. Residue Tyr-413 is the Nucleophile of the active site. Glu-434 is an active-site residue.

This sequence belongs to the glycosyl hydrolase 33 family. Highly expressed in brain, particularly in hippocampus, and at lower levels in liver and spleen. Expressed in hippocampal neurons (at protein level).

The protein localises to the cell membrane. It localises to the endoplasmic reticulum membrane. The protein resides in the microsome membrane. Its subcellular location is the mitochondrion inner membrane. It is found in the mitochondrion outer membrane. The protein localises to the cell projection. It localises to the neuron projection. The protein resides in the lysosome lumen. It carries out the reaction Hydrolysis of alpha-(2-&gt;3)-, alpha-(2-&gt;6)-, alpha-(2-&gt;8)- glycosidic linkages of terminal sialic acid residues in oligosaccharides, glycoproteins, glycolipids, colominic acid and synthetic substrates.. It catalyses the reaction a ganglioside GM3 + H2O = a beta-D-galactosyl-(1-&gt;4)-beta-D-glucosyl-(1&lt;-&gt;1)-ceramide + N-acetylneuraminate. The enzyme catalyses a ganglioside GM3 (d18:1(4E)) + H2O = a beta-D-Gal-(1-&gt;4)-beta-D-Glc-(1&lt;-&gt;1)-Cer(d18:1(4E)) + N-acetylneuraminate. The catalysed reaction is a ganglioside GM2 + H2O = a ganglioside GA2 + N-acetylneuraminate. It carries out the reaction a ganglioside GM2 (d18:1(4E)) + H2O = a ganglioside GA2 (d18:1(4E)) + N-acetylneuraminate. It catalyses the reaction a ganglioside GD1a + H2O = a ganglioside GM1 + N-acetylneuraminate. The enzyme catalyses a ganglioside GD1a (d18:1(4E)) + H2O = a ganglioside GM1 (d18:1(4E)) + N-acetylneuraminate. The catalysed reaction is a ganglioside GD3 + H2O = a ganglioside GM3 + N-acetylneuraminate. It carries out the reaction a ganglioside GD3 (d18:1(4E)) + H2O = a ganglioside GM3 (d18:1(4E)) + N-acetylneuraminate. Functionally, exo-alpha-sialidase that catalyzes the hydrolytic cleavage of the terminal sialic acid (N-acetylneuraminic acid, Neu5Ac) of a glycan moiety in the catabolism of glycolipids, glycoproteins and oligosacharides. Efficiently hydrolyzes gangliosides including alpha-(2-&gt;3)-sialylated GD1a and GM3 and alpha-(2-&gt;8)-sialylated GD3. Hydrolyzes poly-alpha-(2-&gt;8)-sialylated neural cell adhesion molecule NCAM1 likely at growth cones, suppressing neurite outgrowth in hippocampal neurons. May desialylate sialyl Lewis A and X antigens at the cell surface, down-regulating these glycan epitopes recognized by SELE/E selectin in the initiation of cell adhesion and extravasation. Has sialidase activity toward mucin, fetuin and sialyllactose. The polypeptide is Sialidase-4 (Neu4) (Mus musculus (Mouse)).